The sequence spans 313 residues: Epoxide hydrolase 1 (313 aa).

One can recognise an AB hydrolase-1 domain in the interval proline 25–alanine 299. Catalysis depends on aspartate 100, which acts as the Nucleophile. Tyrosine 149 serves as a coordination point for an epoxide. Tyrosine 227 serves as the catalytic Proton donor. Histidine 292 acts as the Proton acceptor in catalysis.

This sequence belongs to the AB hydrolase superfamily. Epoxide hydrolase family. As to quaternary structure, homodimer. In terms of tissue distribution, highly expressed in fruits 15 days after anthesis (15-DAA).

It catalyses the reaction an epoxide + H2O = an ethanediol. It carries out the reaction (24S)-24,25-epoxycucurbitadienol + H2O = (24R)-24,25-dihydroxycucurbitadienol. It functions in the pathway secondary metabolite biosynthesis; terpenoid biosynthesis. Its function is as follows. Epoxide hydrolase involved in the biosynthesis of cucurbitacin and mogroside tetracyclic triterpene natural products (e.g. siamenoside I and mogrosides IV, V and VI). Cucurbitacins have cytotoxic properties and exhibit deterrent taste as a defense barrier against herbivores. Mogrosides are nonsugar highly oxygenated compounds used as high-intensity zero-calorie sweeteners; they also possess pharmacological properties such as regulating immunity, lowering blood sugar and lipid levels, protecting the liver, and acting as antioxidants and antitumor agents. Catalyzes the hydrolysis of aromatic epoxide-containing substrates, such as the conversion of 24,25-epoxycucurbitadienol to 24,25-dihydroxycucurbitadienol. In Siraitia grosvenorii (Monk's fruit), this protein is Epoxide hydrolase 1.